A 45-amino-acid polypeptide reads, in one-letter code: uncharacterized protein (45 aa).

Positions 1 to 19 are cleaved as a signal peptide; it reads MTFQILFLFVFHFVYIFRA.

This is an uncharacterized protein from Saccharomyces cerevisiae (strain ATCC 204508 / S288c) (Baker's yeast).